The following is a 347-amino-acid chain: uncharacterized protein (347 aa).

Zn(2+) contacts are provided by C39, H65, C95, C98, C101, C109, and E152.

This sequence belongs to the zinc-containing alcohol dehydrogenase family. Zn(2+) is required as a cofactor.

This is an uncharacterized protein from Escherichia coli (strain K12).